The chain runs to 72 residues: Translation initiation factor IF-1 (72 aa).

In terms of domain architecture, S1-like spans 1–72 (MAKKDVIELE…TRGRITWRKK (72 aa)).

This sequence belongs to the IF-1 family. As to quaternary structure, component of the 30S ribosomal translation pre-initiation complex which assembles on the 30S ribosome in the order IF-2 and IF-3, IF-1 and N-formylmethionyl-tRNA(fMet); mRNA recruitment can occur at any time during PIC assembly.

The protein localises to the cytoplasm. One of the essential components for the initiation of protein synthesis. Stabilizes the binding of IF-2 and IF-3 on the 30S subunit to which N-formylmethionyl-tRNA(fMet) subsequently binds. Helps modulate mRNA selection, yielding the 30S pre-initiation complex (PIC). Upon addition of the 50S ribosomal subunit IF-1, IF-2 and IF-3 are released leaving the mature 70S translation initiation complex. The protein is Translation initiation factor IF-1 of Clostridioides difficile (strain 630) (Peptoclostridium difficile).